The chain runs to 451 residues: Gamma-aminobutyric acid receptor subunit alpha-2 (451 aa).

A signal peptide spans methionine 1–alanine 28. The Extracellular segment spans residues asparagine 29–lysine 249. An N-linked (GlcNAc...) asparagine glycan is attached at asparagine 38. A 4-aminobutanoate-binding site is contributed by arginine 94. A glycan (N-linked (GlcNAc...) asparagine) is linked at asparagine 138. Position 157 (threonine 157) interacts with 4-aminobutanoate. A disulfide bond links cysteine 166 and cysteine 180. Residues isoleucine 250 to valine 270 traverse the membrane as a helical segment. Topologically, residues serine 271 to proline 280 are cytoplasmic. Residues alanine 281 to alanine 300 form a helical membrane-spanning segment. Residues arginine 301 to threonine 311 are Extracellular-facing. Residues alanine 312–alanine 332 traverse the membrane as a helical segment. The Cytoplasmic portion of the chain corresponds to threonine 333–methionine 420. The tract at residues lysine 389 to lysine 408 is disordered. Basic and acidic residues predominate over residues proline 396–lysine 408. Residues serine 421–leucine 441 form a helical membrane-spanning segment. Residues asparagine 442–proline 451 lie on the Extracellular side of the membrane.

It belongs to the ligand-gated ion channel (TC 1.A.9) family. Gamma-aminobutyric acid receptor (TC 1.A.9.5) subfamily. GABRA2 sub-subfamily. Heteropentamer, formed by a combination of alpha (GABRA1-6), beta (GABRB1-3), gamma (GABRG1-3), delta (GABRD), epsilon (GABRE), rho (GABRR1-3), pi (GABRP) and theta (GABRQ) subunits, each subunit exhibiting distinct physiological and pharmacological properties. Interacts with UBQLN1. Interacts with KIF21B. Interacts with LHFPL4. Interacts with SHISA7; interaction leads to the regulation of GABA(A) receptor trafficking, channel deactivation kinetics and pharmacology. Glycosylated.

It localises to the postsynaptic cell membrane. The protein resides in the cell membrane. It is found in the cytoplasmic vesicle membrane. Its subcellular location is the cell projection. The protein localises to the dendrite. It catalyses the reaction chloride(in) = chloride(out). Its activity is regulated as follows. Activated by pentobarbital. Inhibited by the antagonist bicuculline. Alpha subunit of the heteropentameric ligand-gated chloride channel gated by gamma-aminobutyric acid (GABA), a major inhibitory neurotransmitter in the brain. GABA-gated chloride channels, also named GABA(A) receptors (GABAAR), consist of five subunits arranged around a central pore and contain GABA active binding site(s) located at the alpha and beta subunit interface(s). When activated by GABA, GABAARs selectively allow the flow of chloride anions across the cell membrane down their electrochemical gradient. Chloride influx into the postsynaptic neuron following GABAAR opening decreases the neuron ability to generate a new action potential, thereby reducing nerve transmission. The alpha-2 subunit exhibits synaptogenic activity together with beta-2 and very little to no activity together with beta-3, the gamma-2 subunit being necessary but not sufficient to induce rapid synaptic contacts formation. This Mus musculus (Mouse) protein is Gamma-aminobutyric acid receptor subunit alpha-2.